Consider the following 141-residue polypeptide: Large ribosomal subunit protein uL11 (141 aa).

It belongs to the universal ribosomal protein uL11 family. Part of the ribosomal stalk of the 50S ribosomal subunit. Interacts with L10 and the large rRNA to form the base of the stalk. L10 forms an elongated spine to which L12 dimers bind in a sequential fashion forming a multimeric L10(L12)X complex. In terms of processing, one or more lysine residues are methylated.

Functionally, forms part of the ribosomal stalk which helps the ribosome interact with GTP-bound translation factors. This Chlorobium luteolum (strain DSM 273 / BCRC 81028 / 2530) (Pelodictyon luteolum) protein is Large ribosomal subunit protein uL11.